Here is a 159-residue protein sequence, read N- to C-terminus: uncharacterized protein (159 aa).

4 helical membrane-spanning segments follow: residues 5-27 (TLDLILGIIMGIVTVRATMRGFV), 34-51 (ASILCAAVVAILCHKRLV), 61-83 (SILLPCITFLITFMGVYCVMLFL), and 103-125 (FGFFFGIIEGSVLLTVILLLLHV).

It is found in the cell membrane. This is an uncharacterized protein from Treponema pallidum (strain Nichols).